We begin with the raw amino-acid sequence, 144 residues long: Putative pre-16S rRNA nuclease (144 aa).

It belongs to the YqgF nuclease family.

It is found in the cytoplasm. Functionally, could be a nuclease involved in processing of the 5'-end of pre-16S rRNA. This chain is Putative pre-16S rRNA nuclease, found in Prochlorococcus marinus (strain NATL1A).